Reading from the N-terminus, the 489-residue chain is CUGBP Elav-like family member 1-B (489 aa).

RRM domains lie at 16–99 (IKMF…PADS), 108–188 (RKLF…FADT), and 404–482 (ANLF…LKRS).

It belongs to the CELF/BRUNOL family. As to quaternary structure, oligomer. Oligomerization is required for RNA-binding and EDEN-dependent deadenylation. Post-translationally, phosphorylated during oocyte maturation and dephosphorylated following egg activation. Dephosphorylation is calcium dependent and correlates with the increase in the activity of EDEN-dependent deadenylation.

The protein localises to the nucleus. It is found in the cytoplasm. In terms of biological role, RNA-binding protein implicated in the regulation of several post-transcriptional events. May be involved in pre-mRNA alternative splicing, mRNA translation activation and stability. Mediates the rapid and sequence-specific cytoplasmic deadenylation of EDEN-containing maternal mRNAs following fertilization. Binds to AU-rich sequences (AREs) of jun mRNA. Binds to the embryonic deadenylation element (EDEN) motif localized in the 3'-UTR of maternal mRNAs. Binds to RNA containing several repeats of the consensus sequence 5'-UGU-3'. EDEN-dependent deadenylation is enhanced by the presence of an additional cis element composed of three AUU repeats. The sequence is that of CUGBP Elav-like family member 1-B (cugbp1-b) from Xenopus laevis (African clawed frog).